Consider the following 421-residue polypeptide: Aspartokinase (421 aa).

7–10 (KYGG) lines the ATP pocket. 25–30 (RIVETK) contacts substrate. S41 contributes to the ATP binding site. Residues 45 to 49 (DTTDD), E74, 125 to 126 (LD), 151 to 154 (RGGS), and S154 contribute to the substrate site. ATP is bound by residues 174–175 (TD), 180–185 (FTADPR), and K210. ACT domains are found at residues 267–348 (VTVV…GKVS) and 349–421 (LIGA…GTGR). Substrate is bound by residues D274, 274-279 (DVPGYA), 292-294 (NID), Q298, 360-361 (VT), 374-375 (NI), and 381-382 (SE).

The protein belongs to the aspartokinase family. Heterotetramer consisting of 2 isoforms Alpha (catalytic and regulation) and of a homodimer of 2 isoforms Beta (regulation).

The catalysed reaction is L-aspartate + ATP = 4-phospho-L-aspartate + ADP. It participates in amino-acid biosynthesis; L-lysine biosynthesis via DAP pathway; (S)-tetrahydrodipicolinate from L-aspartate: step 1/4. Its pathway is amino-acid biosynthesis; L-methionine biosynthesis via de novo pathway; L-homoserine from L-aspartate: step 1/3. It functions in the pathway amino-acid biosynthesis; L-threonine biosynthesis; L-threonine from L-aspartate: step 1/5. With respect to regulation, feedback inhibition by lysine and threonine. Its function is as follows. Catalyzes the phosphorylation of the beta-carboxyl group of aspartic acid with ATP to yield 4-phospho-L-aspartate, which is involved in the branched biosynthetic pathway leading to the biosynthesis of amino acids lysine, threonine, isoleucine and methionine. This Mycolicibacterium smegmatis (Mycobacterium smegmatis) protein is Aspartokinase (ask).